The chain runs to 430 residues: Histidinol dehydrogenase (430 aa).

Residues tyrosine 131, glutamine 192, and asparagine 215 each coordinate NAD(+). Substrate-binding residues include serine 238, glutamine 260, and histidine 263. Zn(2+) contacts are provided by glutamine 260 and histidine 263. Catalysis depends on proton acceptor residues glutamate 328 and histidine 329. Substrate is bound by residues histidine 329, aspartate 362, glutamate 416, and histidine 421. Aspartate 362 is a Zn(2+) binding site. A Zn(2+)-binding site is contributed by histidine 421.

This sequence belongs to the histidinol dehydrogenase family. Zn(2+) is required as a cofactor.

It catalyses the reaction L-histidinol + 2 NAD(+) + H2O = L-histidine + 2 NADH + 3 H(+). It functions in the pathway amino-acid biosynthesis; L-histidine biosynthesis; L-histidine from 5-phospho-alpha-D-ribose 1-diphosphate: step 9/9. Catalyzes the sequential NAD-dependent oxidations of L-histidinol to L-histidinaldehyde and then to L-histidine. In Acinetobacter baylyi (strain ATCC 33305 / BD413 / ADP1), this protein is Histidinol dehydrogenase.